A 384-amino-acid polypeptide reads, in one-letter code: Outer membrane protein assembly factor BamB (384 aa).

The first 16 residues, 1-16, serve as a signal peptide directing secretion; that stretch reads MKIRILVLILCALTQG. Cys-17 carries N-palmitoyl cysteine lipidation. A lipid anchor (S-diacylglycerol cysteine) is attached at Cys-17.

This sequence belongs to the BamB family. As to quaternary structure, part of the Bam complex.

It is found in the cell outer membrane. In terms of biological role, part of the outer membrane protein assembly complex, which is involved in assembly and insertion of beta-barrel proteins into the outer membrane. The sequence is that of Outer membrane protein assembly factor BamB from Legionella pneumophila (strain Paris).